The chain runs to 428 residues: Elongation factor 1-alpha (428 aa).

The tr-type G domain occupies 5 to 225 (KPILNVAFIG…DAFQPPEKPT (221 aa)). The G1 stretch occupies residues 14–21 (GHVDAGKS). 14–21 (GHVDAGKS) contributes to the GTP binding site. Ser-21 contributes to the Mg(2+) binding site. The tract at residues 70–74 (GVTID) is G2. A G3 region spans residues 91–94 (DCPG). GTP contacts are provided by residues 91-95 (DCPGH) and 149-152 (NKMD). The tract at residues 149–152 (NKMD) is G4. The G5 stretch occupies residues 189–191 (ASL).

The protein belongs to the TRAFAC class translation factor GTPase superfamily. Classic translation factor GTPase family. EF-Tu/EF-1A subfamily.

It localises to the cytoplasm. The enzyme catalyses GTP + H2O = GDP + phosphate + H(+). Its function is as follows. GTP hydrolase that promotes the GTP-dependent binding of aminoacyl-tRNA to the A-site of ribosomes during protein biosynthesis. This Methanococcus maripaludis (strain C7 / ATCC BAA-1331) protein is Elongation factor 1-alpha.